A 109-amino-acid chain; its full sequence is uncharacterized protein (109 aa).

Residues 27 to 89 (KEEAHQFRDK…LKRIDELIAV (63 aa)) are a coiled coil.

This is an uncharacterized protein from Streptococcus pneumoniae.